The primary structure comprises 529 residues: All-trans-zeta-carotene desaturase (529 aa).

12 to 45 (IVVGAGPGGLSAAINLAGQGFRVTVVEKDAVPGG) serves as a coordination point for FAD.

This sequence belongs to the carotenoid/retinoid oxidoreductase family. FAD is required as a cofactor.

The catalysed reaction is all-trans-zeta-carotene + 2 A = all-trans-lycopene + 2 AH2. It functions in the pathway carotenoid biosynthesis; lycopene biosynthesis. Dehydrogenates carotenes in the trans conformation: converts all-trans-zeta-carotene into all-trans-lycopene, one of the last dehydrogenation steps of lycopene biosynthesis. The polypeptide is All-trans-zeta-carotene desaturase (carC) (Myxococcus xanthus).